The chain runs to 456 residues: Adenylosuccinate lyase (456 aa).

N(6)-(1,2-dicarboxyethyl)-AMP contacts are provided by residues 15–16 (RY), 90–92 (NHD), and 122–123 (TS). Histidine 171 functions as the Proton donor/acceptor in the catalytic mechanism. Residue glutamine 247 coordinates N(6)-(1,2-dicarboxyethyl)-AMP. Serine 295 acts as the Proton donor/acceptor in catalysis. N(6)-(1,2-dicarboxyethyl)-AMP is bound by residues serine 296, 301-303 (KVN), asparagine 309, arginine 335, and 340-344 (STVLR).

Belongs to the lyase 1 family. Adenylosuccinate lyase subfamily. As to quaternary structure, homotetramer. Residues from neighboring subunits contribute catalytic and substrate-binding residues to each active site.

The catalysed reaction is N(6)-(1,2-dicarboxyethyl)-AMP = fumarate + AMP. The enzyme catalyses (2S)-2-[5-amino-1-(5-phospho-beta-D-ribosyl)imidazole-4-carboxamido]succinate = 5-amino-1-(5-phospho-beta-D-ribosyl)imidazole-4-carboxamide + fumarate. Its pathway is purine metabolism; AMP biosynthesis via de novo pathway; AMP from IMP: step 2/2. It functions in the pathway purine metabolism; IMP biosynthesis via de novo pathway; 5-amino-1-(5-phospho-D-ribosyl)imidazole-4-carboxamide from 5-amino-1-(5-phospho-D-ribosyl)imidazole-4-carboxylate: step 2/2. Catalyzes two reactions in de novo purine nucleotide biosynthesis. Catalyzes the breakdown of 5-aminoimidazole- (N-succinylocarboxamide) ribotide (SAICAR or 2-[5-amino-1-(5-phospho-beta-D-ribosyl)imidazole-4-carboxamido]succinate) to 5-aminoimidazole-4-carboxamide ribotide (AICAR or 5-amino-1-(5-phospho-beta-D-ribosyl)imidazole-4-carboxamide) and fumarate, and of adenylosuccinate (ADS or N(6)-(1,2-dicarboxyethyl)-AMP) to adenosine monophosphate (AMP) and fumarate. This Buchnera aphidicola subsp. Acyrthosiphon pisum (strain APS) (Acyrthosiphon pisum symbiotic bacterium) protein is Adenylosuccinate lyase (purB).